The following is a 297-amino-acid chain: Ribosomal RNA small subunit methyltransferase A (297 aa).

6 residues coordinate S-adenosyl-L-methionine: Asn-31, Leu-33, Gly-58, Glu-79, Asp-104, and Asn-129.

This sequence belongs to the class I-like SAM-binding methyltransferase superfamily. rRNA adenine N(6)-methyltransferase family. RsmA subfamily.

The protein resides in the cytoplasm. The enzyme catalyses adenosine(1518)/adenosine(1519) in 16S rRNA + 4 S-adenosyl-L-methionine = N(6)-dimethyladenosine(1518)/N(6)-dimethyladenosine(1519) in 16S rRNA + 4 S-adenosyl-L-homocysteine + 4 H(+). Specifically dimethylates two adjacent adenosines (A1518 and A1519) in the loop of a conserved hairpin near the 3'-end of 16S rRNA in the 30S particle. May play a critical role in biogenesis of 30S subunits. This Staphylococcus aureus (strain Mu3 / ATCC 700698) protein is Ribosomal RNA small subunit methyltransferase A.